Consider the following 474-residue polypeptide: SHC-transforming protein 3 (474 aa).

The segment at 1 to 27 (MSATRKSRAGDEPLPRPPRGAPHTSDQ) is disordered. Residues 29–214 (LGPGVTYVVK…LDEPWTEEEG (186 aa)) enclose the PID domain. A CH1 region spans residues 215–378 (DGPDHPYYNS…RMLEELNAEP (164 aa)). At serine 282 the chain carries Phosphoserine. The disordered stretch occupies residues 308-328 (QPVPPQVWPAATSSTESSPRK). An SH2 domain is found at 379–470 (WYQGEMSRKE…GSELCLQQPV (92 aa)).

In terms of assembly, interacts with the Trk receptors in a phosphotyrosine-dependent manner. Once activated, binds to GRB2. Interacts with activated EGF receptors. Tyrosine phosphorylated. Predominantly expressed in the adult brain.

Signaling adapter that couples activated growth factor receptors to signaling pathway in neurons. Involved in the signal transduction pathways of neurotrophin-activated Trk receptors in cortical neurons. The sequence is that of SHC-transforming protein 3 (Shc3) from Mus musculus (Mouse).